We begin with the raw amino-acid sequence, 702 residues long: Elongation factor G (702 aa).

One can recognise a tr-type G domain in the interval 8-290 (CQYRNIGISA…AIIEYLPAPN (283 aa)). GTP is bound by residues 17–24 (AHIDAGKT), 88–92 (DTPGH), and 142–145 (NKMD).

The protein belongs to the TRAFAC class translation factor GTPase superfamily. Classic translation factor GTPase family. EF-G/EF-2 subfamily.

It is found in the cytoplasm. Functionally, catalyzes the GTP-dependent ribosomal translocation step during translation elongation. During this step, the ribosome changes from the pre-translocational (PRE) to the post-translocational (POST) state as the newly formed A-site-bound peptidyl-tRNA and P-site-bound deacylated tRNA move to the P and E sites, respectively. Catalyzes the coordinated movement of the two tRNA molecules, the mRNA and conformational changes in the ribosome. This Buchnera aphidicola subsp. Schizaphis graminum (strain Sg) protein is Elongation factor G.